Here is a 371-residue protein sequence, read N- to C-terminus: Poly(rC)-binding protein 3 (371 aa).

KH domains are found at residues 45–95 (TLTI…TITG), 129–182 (PVTL…TISG), and 293–357 (ASTH…QYLI).

It localises to the cytoplasm. Single-stranded nucleic acid binding protein that binds preferentially to oligo dC. This is Poly(rC)-binding protein 3 from Homo sapiens (Human).